Here is a 246-residue protein sequence, read N- to C-terminus: 1-(5-phosphoribosyl)-5-[(5-phosphoribosylamino)methylideneamino] imidazole-4-carboxamide isomerase (246 aa).

Asp-8 acts as the Proton acceptor in catalysis. Asp-129 serves as the catalytic Proton donor.

It belongs to the HisA/HisF family.

The protein resides in the cytoplasm. The catalysed reaction is 1-(5-phospho-beta-D-ribosyl)-5-[(5-phospho-beta-D-ribosylamino)methylideneamino]imidazole-4-carboxamide = 5-[(5-phospho-1-deoxy-D-ribulos-1-ylimino)methylamino]-1-(5-phospho-beta-D-ribosyl)imidazole-4-carboxamide. Its pathway is amino-acid biosynthesis; L-histidine biosynthesis; L-histidine from 5-phospho-alpha-D-ribose 1-diphosphate: step 4/9. This chain is 1-(5-phosphoribosyl)-5-[(5-phosphoribosylamino)methylideneamino] imidazole-4-carboxamide isomerase, found in Desulforamulus reducens (strain ATCC BAA-1160 / DSM 100696 / MI-1) (Desulfotomaculum reducens).